Reading from the N-terminus, the 423-residue chain is uncharacterized protein (423 aa).

It belongs to the mycobacterial PPE family.

Could be required for host endothelial-cell invasion and/or intracellular survival. This is an uncharacterized protein from Mycobacterium tuberculosis (strain CDC 1551 / Oshkosh).